We begin with the raw amino-acid sequence, 655 residues long: Phosphatidylinositol-3,5-bisphosphate 3-phosphatase MTMR6 (655 aa).

The region spanning 1–101 (MEHIRTTKVE…YNSLLQLSKQ (101 aa)) is the GRAM domain. The interval 2 to 141 (EHIRTTKVEQ…AEYERMGVPN (140 aa)) is interaction with RAB1B. The residue at position 108 (Tyr-108) is a Phosphotyrosine. The region spanning 124–537 (GWQLIDLAAE…FNFKFWRNMY (414 aa)) is the Myotubularin phosphatase domain. Positions 286, 311, and 312 each coordinate a 1,2-diacyl-sn-glycero-3-phospho-(1D-myo-inositol-3,5-bisphosphate). Residues Asn-286, Asn-311, and Ile-312 each contribute to the a 1,2-diacyl-sn-glycero-3-phospho-(1D-myo-inositol-3-phosphate) site. Cys-374 functions as the Phosphocysteine intermediate in the catalytic mechanism. 8 residues coordinate a 1,2-diacyl-sn-glycero-3-phospho-(1D-myo-inositol-3,5-bisphosphate): Ser-375, Asp-376, Gly-377, Trp-378, Asp-379, Arg-380, Lys-416, and Arg-420. Positions 375, 376, 377, 378, 379, and 380 each coordinate a 1,2-diacyl-sn-glycero-3-phospho-(1D-myo-inositol-3-phosphate). Arg-420 contributes to the a 1,2-diacyl-sn-glycero-3-phospho-(1D-myo-inositol-3-phosphate) binding site. Residues 547–581 (RQSVLNIIMNMNEQNKQLEEDVKDLEAKIKQCKSG) adopt a coiled-coil conformation. Residues Ser-595, Ser-623, and Ser-645 each carry the phosphoserine modification.

Belongs to the protein-tyrosine phosphatase family. Non-receptor class myotubularin subfamily. In terms of assembly, homodimer. Heterodimer (via C-terminus) with MTMR9 (via C-terminus). Interacts with ALKBH4. Interacts with KCNN4. Interacts (via GRAM domain) with RAB1B (in GDP-bound form); the interaction regulates MTMR6 recruitment to the endoplasmic reticulum-Golgi intermediate compartment.

It is found in the cytoplasm. Its subcellular location is the endoplasmic reticulum. The protein localises to the cell projection. It localises to the ruffle membrane. The protein resides in the endoplasmic reticulum-Golgi intermediate compartment. It is found in the perinuclear region. It catalyses the reaction a 1,2-diacyl-sn-glycero-3-phospho-(1D-myo-inositol-3,5-bisphosphate) + H2O = a 1,2-diacyl-sn-glycero-3-phospho-(1D-myo-inositol-5-phosphate) + phosphate. The catalysed reaction is a 1,2-diacyl-sn-glycero-3-phospho-(1D-myo-inositol-3-phosphate) + H2O = a 1,2-diacyl-sn-glycero-3-phospho-(1D-myo-inositol) + phosphate. The enzyme catalyses 1,2-dioctanoyl-sn-glycero-3-phospho-(1D-myo-inositol-3,5-bisphosphate) + H2O = 1,2-dioctanoyl-sn-glycero-3-phospho-(1D-myo-inositol-5-phosphate) + phosphate. It carries out the reaction 1,2-dioctanoyl-sn-glycero-3-phospho-(1-D-myo-inositol-3-phosphate) + H2O = 1,2-dioctanoyl-sn-glycero-3-phospho-(1D-myo-inositol) + phosphate. Allosterically activated by phosphatidylserine and/or phosphatidylinositol 4-phosphate (PtdIns(4)P), and phosphatidylinositol 5-phosphate (PtdIns(5)P). Interaction with MTMR9 increases catalytic activity towards phosphatidylinositol 3,5-bisphosphate. Lipid phosphatase that specifically dephosphorylates the D-3 position of phosphatidylinositol 3-phosphate and phosphatidylinositol 3,5-bisphosphate, generating phosphatidylinositol and phosphatidylinositol 5-phosphate. Binds with high affinity to phosphatidylinositol 3,5-bisphosphate (PtdIns(3,5)P2) but also to phosphatidylinositol 3-phosphate (PtdIns(3)P), phosphatidylinositol 4-phosphate (PtdIns(4)P), and phosphatidylinositol 5-phosphate (PtdIns(5)P), phosphatidic acid and phosphatidylserine. Negatively regulates ER-Golgi protein transport. Probably in association with MTMR9, plays a role in the late stages of macropinocytosis by dephosphorylating phosphatidylinositol 3-phosphate in membrane ruffles. Acts as a negative regulator of KCNN4/KCa3.1 channel activity in CD4(+) T-cells possibly by decreasing intracellular levels of phosphatidylinositol 3-phosphate. Negatively regulates proliferation of reactivated CD4(+) T-cells. In complex with MTMR9, negatively regulates DNA damage-induced apoptosis. The formation of the MTMR6-MTMR9 complex stabilizes both MTMR6 and MTMR9 protein levels. This is Phosphatidylinositol-3,5-bisphosphate 3-phosphatase MTMR6 from Rattus norvegicus (Rat).